Reading from the N-terminus, the 246-residue chain is 3-deoxy-manno-octulosonate cytidylyltransferase (246 aa).

It belongs to the KdsB family.

It localises to the cytoplasm. The catalysed reaction is 3-deoxy-alpha-D-manno-oct-2-ulosonate + CTP = CMP-3-deoxy-beta-D-manno-octulosonate + diphosphate. The protein operates within nucleotide-sugar biosynthesis; CMP-3-deoxy-D-manno-octulosonate biosynthesis; CMP-3-deoxy-D-manno-octulosonate from 3-deoxy-D-manno-octulosonate and CTP: step 1/1. It functions in the pathway bacterial outer membrane biogenesis; lipopolysaccharide biosynthesis. Activates KDO (a required 8-carbon sugar) for incorporation into bacterial lipopolysaccharide in Gram-negative bacteria. The protein is 3-deoxy-manno-octulosonate cytidylyltransferase of Rickettsia peacockii (strain Rustic).